A 501-amino-acid chain; its full sequence is ATP synthase subunit alpha (501 aa).

169-176 lines the ATP pocket; that stretch reads GDRQTGKT.

It belongs to the ATPase alpha/beta chains family. F-type ATPases have 2 components, CF(1) - the catalytic core - and CF(0) - the membrane proton channel. CF(1) has five subunits: alpha(3), beta(3), gamma(1), delta(1), epsilon(1). CF(0) has three main subunits: a(1), b(2) and c(9-12). The alpha and beta chains form an alternating ring which encloses part of the gamma chain. CF(1) is attached to CF(0) by a central stalk formed by the gamma and epsilon chains, while a peripheral stalk is formed by the delta and b chains.

The protein resides in the cell membrane. It catalyses the reaction ATP + H2O + 4 H(+)(in) = ADP + phosphate + 5 H(+)(out). Its function is as follows. Produces ATP from ADP in the presence of a proton gradient across the membrane. The alpha chain is a regulatory subunit. This Streptococcus thermophilus (strain CNRZ 1066) protein is ATP synthase subunit alpha.